The chain runs to 848 residues: Neurofilament medium polypeptide (848 aa).

The span at 1-10 (MSYTLDSLGN) shows a compositional bias: polar residues. Residues 1-51 (MSYTLDSLGNPSAYRRVTETRSSFSRVSGSPSSGFRSQSWSRGSPSTVSSS) are disordered. At serine 2 the chain carries N-acetylserine. The tract at residues 2–102 (SYTLDSLGNP…KLSRSNEKEQ (101 aa)) is head. Residues 21 to 44 (RSSFSRVSGSPSSGFRSQSWSRGS) show a composition bias toward low complexity. The residue at position 30 (serine 30) is a Phosphoserine. At arginine 42 the chain carries Omega-N-methylarginine. Residue threonine 47 is glycosylated (O-linked (GlcNAc) threonine). Position 97 is a phosphoserine (serine 97). The 312-residue stretch at 99 to 410 (EKEQLQGLND…KLLEGEETRF (312 aa)) folds into the IF rod domain. The tract at residues 103–134 (LQGLNDRFAGYIEKVHYLEQQNKEIEAEIQAL) is coil 1A. The tract at residues 135 to 147 (RQKQASHAQLGDA) is linker 1. Positions 148 to 246 (YDQEIRELRA…EEEVADLLAQ (99 aa)) are coil 1B. Serine 224 bears the Phosphoserine mark. The segment at 247–263 (IQASHITVERKDYLKTD) is linker 12. The segment at 264–285 (ISTALKEIRSQLECHSDQNMHQ) is coil 2A. The tract at residues 286-289 (AEEW) is linker 2. A coil 2B region spans residues 290–410 (FKCRYAKLTE…KLLEGEETRF (121 aa)). A Phosphotyrosine modification is found at tyrosine 318. Residues serine 344, serine 416, and serine 428 each carry the phosphoserine modification. The tail stretch occupies residues 411 to 848 (STFSGSITGP…AIVKEVTQGD (438 aa)). Threonine 430 is a glycosylation site (O-linked (GlcNAc) threonine). Phosphoserine is present on residues serine 466 and serine 482. Positions 482 to 785 (SAKEEKEEAE…GEDSSDDKVV (304 aa)) are disordered. Residues 488–498 (EEAEEKEEEPE) are compositionally biased toward acidic residues. The segment covering 499-509 (AEKSPVKSPEA) has biased composition (basic and acidic residues). Serine 502 and serine 506 each carry phosphoserine. The segment covering 510 to 533 (KEEEEEGEKEEEEEGQEEEEEEDE) has biased composition (acidic residues). A compositionally biased stretch (basic and acidic residues) spans 534-553 (GVKSDQAEEGGSEKEGSSEK). Residues serine 537, serine 545, serine 550, and serine 551 each carry the phosphoserine modification. The segment covering 554–576 (DEGEQEEEEGETEAEGEGEEAEA) has biased composition (acidic residues). Phosphothreonine is present on threonine 565. Residues 577-604 (KEEKKIEGKVEEVAVKEEIKVEKPEKAK) are compositionally biased toward basic and acidic residues. 2 positions are modified to phosphoserine: serine 605 and serine 610. Basic and acidic residues-rich tracts occupy residues 611–677 (PVEE…KAVE) and 689–711 (SLEK…KAEE). Threonine 642 bears the Phosphothreonine mark. Phosphoserine is present on residues serine 645, serine 669, serine 689, serine 715, serine 723, serine 753, and serine 769. 2 stretches are compositionally biased toward basic and acidic residues: residues 720-732 (SDRS…KEDI) and 748-760 (TQEK…EEKG). A compositionally biased stretch (basic and acidic residues) spans 771 to 785 (AEEKKGEDSSDDKVV).

This sequence belongs to the intermediate filament family. In terms of assembly, forms heterodimers with NEFL; which can further hetero-oligomerize (in vitro). Forms heterodimers with INA (in vitro). There are a number of repeats of the tripeptide K-S-P, NFM is phosphorylated on a number of the serines in this motif. It is thought that phosphorylation of NFM results in the formation of interfilament cross bridges that are important in the maintenance of axonal caliber. In terms of processing, phosphorylation seems to play a major role in the functioning of the larger neurofilament polypeptides (NF-M and NF-H), the levels of phosphorylation being altered developmentally and coincidentally with a change in the neurofilament function. Post-translationally, phosphorylated in the head and rod regions by the PKC kinase PKN1, leading to the inhibition of polymerization. As to expression, expressed in the sciatic nerve (at protein level).

It localises to the cytoplasm. It is found in the cytoskeleton. Its subcellular location is the cell projection. The protein localises to the axon. In terms of biological role, neurofilaments usually contain three intermediate filament proteins: NEFL, NEFM, and NEFH which are involved in the maintenance of neuronal caliber. May additionally cooperate with the neuronal intermediate filament proteins PRPH and INA to form neuronal filamentous networks. This is Neurofilament medium polypeptide (Nefm) from Mus musculus (Mouse).